Here is a 102-residue protein sequence, read N- to C-terminus: MYAIIEAGGKQFCVEEGSKIFVSKIDAEVGTEIFFDKIFMIGGSSPQIGTPYINNAKVIAKVLEHGRDKKILVFKKWRRNDSRKLQGHRQDYTALKVTGIQL.

Belongs to the bacterial ribosomal protein bL21 family. As to quaternary structure, part of the 50S ribosomal subunit. Contacts protein L20.

Functionally, this protein binds to 23S rRNA in the presence of protein L20. The protein is Large ribosomal subunit protein bL21 of Lawsonia intracellularis.